A 187-amino-acid polypeptide reads, in one-letter code: Elongation factor P (187 aa).

It belongs to the elongation factor P family.

It is found in the cytoplasm. The protein operates within protein biosynthesis; polypeptide chain elongation. Functionally, involved in peptide bond synthesis. Stimulates efficient translation and peptide-bond synthesis on native or reconstituted 70S ribosomes in vitro. Probably functions indirectly by altering the affinity of the ribosome for aminoacyl-tRNA, thus increasing their reactivity as acceptors for peptidyl transferase. This chain is Elongation factor P, found in Magnetococcus marinus (strain ATCC BAA-1437 / JCM 17883 / MC-1).